We begin with the raw amino-acid sequence, 533 residues long: Metallothionein expression activator (533 aa).

2 consecutive C2H2-type zinc fingers follow at residues 443–472 (YVCL…SDRP) and 473–500 (YRCD…NGRP). A C2H2-type 3; atypical zinc finger spans residues 501–524 (YVCECLKRFNRLDALNRHKQRNIC).

The protein localises to the nucleus. In terms of biological role, regulates the transcription of genes required for cell separation. This chain is Metallothionein expression activator (ace2), found in Schizosaccharomyces pombe (strain 972 / ATCC 24843) (Fission yeast).